The chain runs to 212 residues: ATP phosphoribosyltransferase (212 aa).

Belongs to the ATP phosphoribosyltransferase family. Short subfamily. In terms of assembly, heteromultimer composed of HisG and HisZ subunits.

Its subcellular location is the cytoplasm. The enzyme catalyses 1-(5-phospho-beta-D-ribosyl)-ATP + diphosphate = 5-phospho-alpha-D-ribose 1-diphosphate + ATP. It participates in amino-acid biosynthesis; L-histidine biosynthesis; L-histidine from 5-phospho-alpha-D-ribose 1-diphosphate: step 1/9. Functionally, catalyzes the condensation of ATP and 5-phosphoribose 1-diphosphate to form N'-(5'-phosphoribosyl)-ATP (PR-ATP). Has a crucial role in the pathway because the rate of histidine biosynthesis seems to be controlled primarily by regulation of HisG enzymatic activity. This Geobacter metallireducens (strain ATCC 53774 / DSM 7210 / GS-15) protein is ATP phosphoribosyltransferase.